We begin with the raw amino-acid sequence, 138 residues long: Large ribosomal subunit protein bL17 (138 aa).

The protein belongs to the bacterial ribosomal protein bL17 family. As to quaternary structure, part of the 50S ribosomal subunit. Contacts protein L32.

This is Large ribosomal subunit protein bL17 from Nitrobacter hamburgensis (strain DSM 10229 / NCIMB 13809 / X14).